Reading from the N-terminus, the 1148-residue chain is Putative ATP-dependent RNA helicase rha-2 (1148 aa).

A compositionally biased stretch (basic and acidic residues) spans 1-10 (MGKRKTKEDN). 2 disordered regions span residues 1–51 (MGKR…FAKE) and 101–163 (STKL…DAGN). The span at 138-160 (PTDDESSSEEEEEEEEGDNDIED) shows a compositional bias: acidic residues. The Helicase ATP-binding domain occupies 246–412 (VEAINENLVT…KLFPLLTPKV (167 aa)). Residue 259-266 (GETGSGKT) coordinates ATP. Residues 355–358 (DEAH) carry the DEAH box motif. A Helicase C-terminal domain is found at 463–703 (EVKQLITKLK…QLVLHLKSMN (241 aa)).

This sequence belongs to the DEAD box helicase family. DEAH subfamily.

The catalysed reaction is ATP + H2O = ADP + phosphate + H(+). Its function is as follows. Probable ATP-binding RNA helicase. This Caenorhabditis elegans protein is Putative ATP-dependent RNA helicase rha-2 (rha-2).